We begin with the raw amino-acid sequence, 185 residues long: MENVNLTNHFLIAMPGMVDPNFNGTLTYICDHSDQGALGVVVNRPIDLDLSTLFEQIGLSLPEGLHGEIVYFGGPVQTERGFVLHTPPLTFSSTLTVNDAVSLTTSKDVLEAVSQGAGPEKFIVSLGYAGWSAGQLEDELKQNAWLSVAADPQVIFDLAPEERLPAAMKLLGIDFASLSDEAGHA.

Belongs to the UPF0301 (AlgH) family.

This chain is UPF0301 protein Tbd_2579, found in Thiobacillus denitrificans (strain ATCC 25259 / T1).